The sequence spans 295 residues: Protoheme IX farnesyltransferase 2 (295 aa).

Helical transmembrane passes span 9-29, 36-56, 83-103, 108-128, 135-155, 163-183, 209-229, 230-250, and 264-284; these read ITKPGIIFGNVLSVAGGFFLA, FALFLAVVIGTSLVVASGCVF, LPLALIYATLLGVAGFSLLYV, LSAFCALIGFIVYVGFYSLWL, GTLVGSLSGAMPPVIGYCAVS, VTLLVMFSLWQMPHSFAIAIF, IVLYVLAFVLATLMLTLGGYA, GLGYLAVAAAMGLYWLYMAWG, and VFGFSILTVTALSVMMGVDSQ.

This sequence belongs to the UbiA prenyltransferase family. Protoheme IX farnesyltransferase subfamily.

Its subcellular location is the cell inner membrane. It catalyses the reaction heme b + (2E,6E)-farnesyl diphosphate + H2O = Fe(II)-heme o + diphosphate. Its pathway is porphyrin-containing compound metabolism; heme O biosynthesis; heme O from protoheme: step 1/1. Its function is as follows. Converts heme B (protoheme IX) to heme O by substitution of the vinyl group on carbon 2 of heme B porphyrin ring with a hydroxyethyl farnesyl side group. The chain is Protoheme IX farnesyltransferase 2 from Pseudomonas putida (strain GB-1).